A 272-amino-acid polypeptide reads, in one-letter code: 2-succinyl-6-hydroxy-2,4-cyclohexadiene-1-carboxylate synthase (272 aa).

Belongs to the AB hydrolase superfamily. MenH family. Monomer.

The enzyme catalyses 5-enolpyruvoyl-6-hydroxy-2-succinyl-cyclohex-3-ene-1-carboxylate = (1R,6R)-6-hydroxy-2-succinyl-cyclohexa-2,4-diene-1-carboxylate + pyruvate. It participates in quinol/quinone metabolism; 1,4-dihydroxy-2-naphthoate biosynthesis; 1,4-dihydroxy-2-naphthoate from chorismate: step 3/7. The protein operates within quinol/quinone metabolism; menaquinone biosynthesis. Catalyzes a proton abstraction reaction that results in 2,5-elimination of pyruvate from 2-succinyl-5-enolpyruvyl-6-hydroxy-3-cyclohexene-1-carboxylate (SEPHCHC) and the formation of 2-succinyl-6-hydroxy-2,4-cyclohexadiene-1-carboxylate (SHCHC). The sequence is that of 2-succinyl-6-hydroxy-2,4-cyclohexadiene-1-carboxylate synthase from Yersinia pseudotuberculosis serotype I (strain IP32953).